Consider the following 578-residue polypeptide: ATP-dependent RNA helicase CHR1 (578 aa).

Residues 1 to 95 (MDIFRILSRG…NETKAKEEEI (95 aa)) form a disordered region. Composition is skewed to basic and acidic residues over residues 44–53 (EVERETDFFH) and 78–94 (NKEEQMETNETKAKEEE). Residues 131–159 (DMIGRFHINKKVLSNLIDNEFVEPTPIQC) carry the Q motif motif. Positions 162–339 (IPITLNNRDL…HSIMKDPLRI (178 aa)) constitute a Helicase ATP-binding domain. 175–182 (APTGSGKT) provides a ligand contact to ATP. The DEAD box signature appears at 286–289 (DEAD). The Helicase C-terminal domain occupies 350-514 (TIDQKLVFTG…GYSQWMEDMG (165 aa)). Composition is skewed to basic and acidic residues over residues 517-531 (SKKEKKQIKTHEIQR) and 561-578 (ESKQESKQESHSNDEREE). The tract at residues 517–578 (SKKEKKQIKT…ESHSNDEREE (62 aa)) is disordered.

It belongs to the DEAD box helicase family. DDX52/ROK1 subfamily. In terms of assembly, interacts with the U3 snoRNA and is associated with the 90S and 40S pre-ribosomes.

It localises to the nucleus. It is found in the nucleolus. It catalyses the reaction ATP + H2O = ADP + phosphate + H(+). Its function is as follows. ATP-dependent RNA helicase involved in 40S ribosomal subunit biogenesis. Required for the processing and cleavage of 35S pre-rRNA at sites A0, A1, and A2, leading to mature 18S rRNA. The sequence is that of ATP-dependent RNA helicase CHR1 (CHR1) from Candida albicans (strain SC5314 / ATCC MYA-2876) (Yeast).